Here is a 1499-residue protein sequence, read N- to C-terminus: Streptococcal surface protein B (1499 aa).

An N-terminal signal peptide occupies residues 1-37 (MQKREVFGFRKSKVAKTLCGAVLGAALIAIADQQVLA). The interval 50-84 (AVTTTGNPATNLPEAQGEATEAASQSQAQAGSKDG) is disordered. Ag I/II A repeat units lie at residues 145–219 (KKTT…QKAN), 220–301 (EDSQ…KKAK), 302–383 (EDND…KQAN), and 384–465 (ATNE…KKDF). Disordered stretches follow at residues 689-709 (YADS…SEWD), 763-907 (TAPT…TPPV), and 1409-1472 (RTTT…TGTN). Basic and acidic residues predominate over residues 694–705 (NAEKSRGARWDT). Residues 789 to 799 (PTPPVKTPDQP) are compositionally biased toward pro residues. The segment covering 800-815 (EPSKPEEPTYETEKPL) has biased composition (basic and acidic residues). The span at 828–838 (PTPPVKIPDQP) shows a compositional bias: pro residues. The segment covering 839-854 (EPSKPEEPTYETEKPL) has biased composition (basic and acidic residues). Pro residues-rich tracts occupy residues 867-877 (PTPPVKTPDQP) and 888-907 (DPLP…TPPV). The span at 1428 to 1450 (KPKDPDKPETPKEPKVPSPKVED) shows a compositional bias: basic and acidic residues. Positions 1466 to 1470 (LPKTG) match the LPXTG sorting signal motif. A Pentaglycyl murein peptidoglycan amidated threonine modification is found at Thr1469. The propeptide at 1470 to 1499 (GTNDATYMPYLGLAALVGFLGLGLAKRKED) is removed by sortase.

Belongs to the antigen I/II family.

The protein localises to the secreted. The protein resides in the cell wall. Its subcellular location is the cell surface. Adhesin that mediates binding of bacteria to a variety of host cells. Plays a role in the bacterial invasion of dentinal tubules. A host immunostimulatory component, it modulates the innate immunity response. Plays a protective role against some antibiotics and cationic antimicrobial peptides (histatin-5, HTN3, but not beta-defensin 4A, DEFB4A). The protein is Streptococcal surface protein B of Streptococcus gordonii (strain Challis / ATCC 35105 / BCRC 15272 / CH1 / DL1 / V288).